Reading from the N-terminus, the 359-residue chain is Type-1 angiotensin II receptor (359 aa).

Residues 1-25 lie on the Extracellular side of the membrane; the sequence is MILNSSTEDGIKRIQDDCPKAGRHN. The N-linked (GlcNAc...) asparagine glycan is linked to Asn-4. Residues Gln-15 and Asp-17 each coordinate angiotensin II. Disulfide bonds link Cys-18-Cys-274 and Cys-101-Cys-180. Residues 26–55 traverse the membrane as a helical segment; that stretch reads YIFIMIPTLYSIIFVVGLFGNSLVVIVIYF. The Cytoplasmic segment spans residues 56–61; the sequence is YMKLKT. A helical membrane pass occupies residues 62-89; sequence VASVFLLNLALADLCFLLTLPLWAVYTA. Topologically, residues 90–98 are extracellular; it reads MEYRWPFGN. The chain crosses the membrane as a helical span at residues 99–125; that stretch reads YLCKIASGSVSFNLYASVFLLTCLSID. Residues 126–141 lie on the Cytoplasmic side of the membrane; the sequence is RYLAIVHPMKSRLRRT. The chain crosses the membrane as a helical span at residues 142-165; that stretch reads MLVAKVTCIIIWLLAGLASLPTII. At 166–190 the chain is on the extracellular side; sequence HRNVFFIENTNITVCAFHYESQNST. Arg-167 is a binding site for angiotensin II. N-linked (GlcNAc...) asparagine glycosylation is present at Asn-176. Residues Phe-182, His-183, and Tyr-184 each coordinate angiotensin II. Residue Asn-188 is glycosylated (N-linked (GlcNAc...) asparagine). The chain crosses the membrane as a helical span at residues 191-216; the sequence is LPVGLGLTKNILGFLFPFLIILTSYT. An angiotensin II-binding site is contributed by Lys-199. Over 217–239 the chain is Cytoplasmic; it reads LIWKTLKKAYEIQKNKPRKDDIF. A helical transmembrane segment spans residues 240–268; that stretch reads KIILAIVLFFFFSWVPHQIFTFMDVLIQL. Residues 269–278 lie on the Extracellular side of the membrane; sequence GLIRDCKIED. A helical membrane pass occupies residues 279-304; the sequence is IVDTAMPITICLAYFNNCLNPPFYGF. Over 305-359 the chain is Cytoplasmic; sequence LGKKFKKYFLQLLKYIPPKAKSHSNLSTKMSTLSYRPSENGNSSTKKPAPCTEVE. The segment covering 335–350 has biased composition (polar residues); it reads STLSYRPSENGNSSTK. The tract at residues 335–359 is disordered; sequence STLSYRPSENGNSSTKKPAPCTEVE. A lipid anchor (S-palmitoyl cysteine) is attached at Cys-355.

Belongs to the G-protein coupled receptor 1 family. Interacts with MAS1. Interacts with ARRB1. Interacts with FLNA (via filamin repeat 21); increases PKA-mediated phosphorylation of FLNA. C-terminal Ser or Thr residues may be phosphorylated.

It is found in the cell membrane. Functionally, receptor for angiotensin II, a vasoconstricting peptide, which acts as a key regulator of blood pressure and sodium retention by the kidney. The activated receptor in turn couples to G-alpha proteins G(q) (GNAQ, GNA11, GNA14 or GNA15) and thus activates phospholipase C and increases the cytosolic Ca(2+) concentrations, which in turn triggers cellular responses such as stimulation of protein kinase C. In Ovis aries (Sheep), this protein is Type-1 angiotensin II receptor (AGTR1).